Reading from the N-terminus, the 1069-residue chain is Rab GTPase-activating protein 1 (1069 aa).

The interval 1-79 is disordered; that stretch reads MDDKASVGKI…DPPMDDQPGE (79 aa). Low complexity predominate over residues 7–22; sequence VGKISVSSDSVSTLNS. S42 bears the Phosphoserine mark. One can recognise a PID domain in the interval 142–298; it reads EDSVVFSKLT…IFTFSVSLEI (157 aa). Residue S360 is modified to Phosphoserine. Residues 482-527 form a disordered region; that stretch reads ERERRKTTASPSVRLPQSGSQSSVIPSPPEDDEEEDNDEPLLSGSG. Residues 489–506 show a composition bias toward polar residues; the sequence is TASPSVRLPQSGSQSSVI. The span at 510–520 shows a compositional bias: acidic residues; that stretch reads PEDDEEEDNDE. The region spanning 566–752 is the Rab-GAP TBC domain; that stretch reads GVPEALRGEV…HIIDLLLCEG (187 aa). Residues 798–1047 are a coiled coil; sequence KKLMELACNM…ALNEVQAAKK (250 aa). Phosphothreonine is present on T996.

Interacts with RAB6A and tubulin gamma.

The protein resides in the cytoplasm. Its subcellular location is the cytosol. It is found in the cytoskeleton. It localises to the microtubule organizing center. The protein localises to the centrosome. In terms of biological role, may act as a GTPase-activating protein of RAB6A. May play a role in microtubule nucleation by centrosome. May participate in a RAB6A-mediated pathway involved in the metaphase-anaphase transition. This is Rab GTPase-activating protein 1 (RABGAP1) from Homo sapiens (Human).